Consider the following 371-residue polypeptide: 4-hydroxybenzoate polyprenyltransferase, mitochondrial (371 aa).

The transit peptide at 1 to 45 directs the protein to the mitochondrion; sequence MLGSCGAGLVRGLRAETQAWLWGTRGRSLALVHAARGLHAANWQP. The Mitochondrial matrix portion of the chain corresponds to 46–83; it reads SPGQGPRGRPLSLSAAAVVNSAPRPLQPYLRLMRLDKP. The helical transmembrane segment at 84–104 threads the bilayer; that stretch reads IGTWLLYLPCTWSIGLAADPG. Topologically, residues 105–108 are mitochondrial intermembrane; it reads CLPD. A helical transmembrane segment spans residues 109-129; sequence WYMLSLFGTGAVLMRGAGCTI. Topologically, residues 130–171 are mitochondrial matrix; that stretch reads NDMWDRDYDKKVTRTASRPIAAGDISTFRSFVFLGGQLTLAL. The chain crosses the membrane as a helical span at residues 172 to 192; that stretch reads GVLLCLNYYSIALGAASLLLV. At 193–200 the chain is on the mitochondrial intermembrane side; it reads TTYPLMKR. Residues 201–221 traverse the membrane as a helical segment; sequence ITYWPQLALGLTFNWGALLGW. Over 222 to 231 the chain is Mitochondrial matrix; the sequence is SAVKGSCDPS. Residues 232 to 252 traverse the membrane as a helical segment; that stretch reads VCLPLYFSGIMWTLIYDTIYA. At 253–277 the chain is on the mitochondrial intermembrane side; that stretch reads HQDKKDDALIGLKSTALLFREDTKK. A helical membrane pass occupies residues 278–298; the sequence is WLSGFSVAMLGALSLVGVNSG. The Mitochondrial matrix portion of the chain corresponds to 299 to 300; that stretch reads QT. The helical transmembrane segment at 301–321 threads the bilayer; sequence MPYYTALAAVGAHLAHQIYTL. Residues 322–332 are Mitochondrial intermembrane-facing; the sequence is DINRPEDCWEK. A helical transmembrane segment spans residues 333–353; it reads FTSNRTIGLIIFLGIVLGNLC. Over 354-371 the chain is Mitochondrial matrix; that stretch reads KAKETDKTRKNIENRMEN.

The protein belongs to the UbiA prenyltransferase family. Mg(2+) is required as a cofactor.

The protein localises to the mitochondrion inner membrane. The catalysed reaction is an all-trans-polyprenyl diphosphate + 4-hydroxybenzoate = a 4-hydroxy-3-(all-trans-polyprenyl)benzoate + diphosphate. It carries out the reaction all-trans-decaprenyl diphosphate + 4-hydroxybenzoate = 4-hydroxy-3-(all-trans-decaprenyl)benzoate + diphosphate. The enzyme catalyses all-trans-nonaprenyl diphosphate + 4-hydroxybenzoate = 4-hydroxy-3-(all-trans-nonaprenyl)benzoate + diphosphate. It participates in cofactor biosynthesis; ubiquinone biosynthesis. Functionally, mediates the second step in the final reaction sequence of coenzyme Q (CoQ) biosynthesis. Catalyzes the prenylation of para-hydroxybenzoate (PHB) with an all-trans polyprenyl donor (such as all-trans-decaprenyl diphosphate). The length of the polyprenyl side chain varies depending on the species, in humans, the side chain is comprised of 10 isoprenyls (decaprenyl) producing CoQ10 (also known as ubiquinone), whereas rodents predominantly generate CoQ9. However, this specificity is not complete, human tissues have low amounts of CoQ9 and rodent organs contain some CoQ10. Plays a central role in the biosynthesis of CoQ10. CoQ10 is a vital molecule that transports electrons from mitochondrial respiratory chain complexes. CoQs also function as cofactors for uncoupling protein and play a role as regulators of the extracellularly-induced ceramide-dependent apoptotic pathway. Regulates mitochondrial permeability transition pore (mPTP) opening and ROS production (pivotal events in cell death) in a tissue specific manner. The protein is 4-hydroxybenzoate polyprenyltransferase, mitochondrial of Bos taurus (Bovine).